The primary structure comprises 118 residues: Small ribosomal subunit protein uS13 (118 aa).

The segment at 93–118 (RGLPVRGQRTKTNARTRKGPRKPIRK) is disordered.

It belongs to the universal ribosomal protein uS13 family. As to quaternary structure, part of the 30S ribosomal subunit. Forms a loose heterodimer with protein S19. Forms two bridges to the 50S subunit in the 70S ribosome.

In terms of biological role, located at the top of the head of the 30S subunit, it contacts several helices of the 16S rRNA. In the 70S ribosome it contacts the 23S rRNA (bridge B1a) and protein L5 of the 50S subunit (bridge B1b), connecting the 2 subunits; these bridges are implicated in subunit movement. Contacts the tRNAs in the A and P-sites. The sequence is that of Small ribosomal subunit protein uS13 from Pseudomonas paraeruginosa (strain DSM 24068 / PA7) (Pseudomonas aeruginosa (strain PA7)).